A 424-amino-acid polypeptide reads, in one-letter code: Histidine--tRNA ligase (424 aa).

Belongs to the class-II aminoacyl-tRNA synthetase family. As to quaternary structure, homodimer.

Its subcellular location is the cytoplasm. It carries out the reaction tRNA(His) + L-histidine + ATP = L-histidyl-tRNA(His) + AMP + diphosphate + H(+). The protein is Histidine--tRNA ligase of Bacillus velezensis (strain DSM 23117 / BGSC 10A6 / LMG 26770 / FZB42) (Bacillus amyloliquefaciens subsp. plantarum).